The chain runs to 375 residues: Aminomethyltransferase (375 aa).

This sequence belongs to the GcvT family. As to quaternary structure, the glycine cleavage system is composed of four proteins: P, T, L and H.

It catalyses the reaction N(6)-[(R)-S(8)-aminomethyldihydrolipoyl]-L-lysyl-[protein] + (6S)-5,6,7,8-tetrahydrofolate = N(6)-[(R)-dihydrolipoyl]-L-lysyl-[protein] + (6R)-5,10-methylene-5,6,7,8-tetrahydrofolate + NH4(+). Functionally, the glycine cleavage system catalyzes the degradation of glycine. The chain is Aminomethyltransferase from Symbiobacterium thermophilum (strain DSM 24528 / JCM 14929 / IAM 14863 / T).